The sequence spans 916 residues: DNA mismatch repair protein MutS (916 aa).

A disordered region spans residues 1-47 (MSEALSVPAAEGENTVTASESPDLAATSARAEKVGKQEKPEKAEKQS). Over residues 30 to 45 (RAEKVGKQEKPEKAEK) the composition is skewed to basic and acidic residues. An ATP-binding site is contributed by 656-663 (GPNMGGKS). The segment covering 843–861 (ADATPTPQMDLFSAQSSPS) has biased composition (polar residues). A disordered region spans residues 843–880 (ADATPTPQMDLFSAQSSPSADDEDDKSAGQSAVPPAQA).

This sequence belongs to the DNA mismatch repair MutS family.

Functionally, this protein is involved in the repair of mismatches in DNA. It is possible that it carries out the mismatch recognition step. This protein has a weak ATPase activity. The sequence is that of DNA mismatch repair protein MutS from Cupriavidus metallidurans (strain ATCC 43123 / DSM 2839 / NBRC 102507 / CH34) (Ralstonia metallidurans).